The chain runs to 352 residues: Uroporphyrinogen decarboxylase (352 aa).

Residues 27-31, Asp-77, Tyr-154, Thr-209, and His-325 contribute to the substrate site; that span reads RQAGR.

Belongs to the uroporphyrinogen decarboxylase family. As to quaternary structure, homodimer.

The protein resides in the cytoplasm. It catalyses the reaction uroporphyrinogen III + 4 H(+) = coproporphyrinogen III + 4 CO2. It functions in the pathway porphyrin-containing compound metabolism; protoporphyrin-IX biosynthesis; coproporphyrinogen-III from 5-aminolevulinate: step 4/4. In terms of biological role, catalyzes the decarboxylation of four acetate groups of uroporphyrinogen-III to yield coproporphyrinogen-III. This chain is Uroporphyrinogen decarboxylase, found in Legionella pneumophila (strain Lens).